The sequence spans 428 residues: C4-dicarboxylate transport protein (428 aa).

A run of 9 helical transmembrane segments spans residues 4-24, 44-64, 76-96, 142-162, 184-204, 222-242, 289-309, 326-346, and 352-372; these read SLFK…ILLG, LIKM…IAGM, VALL…LIIV, IGAF…LFGF, VIFG…FGAM, LIIC…GTIA, VVGL…SIYL, IFHQ…AAGV, and IVLA…LALI.

It belongs to the dicarboxylate/amino acid:cation symporter (DAACS) (TC 2.A.23) family.

Its subcellular location is the cell inner membrane. Functionally, responsible for the transport of dicarboxylates such as succinate, fumarate, and malate from the periplasm across the membrane. This chain is C4-dicarboxylate transport protein, found in Salmonella gallinarum (strain 287/91 / NCTC 13346).